The primary structure comprises 719 residues: MGKMKDKDVDAEKYEKAQRSPKLCGTNYPVSIAFIVVNEFCERFSYYGMKAVLTLYFMNYLHWDKNLSTAIYHAFSGLCYFTPLLGALIADSWLGKFKTIIYLSIVYVIGHVVKSVGAIPDVGDSTVHIALSMVGLGLIALGTGGIKPCVAAFGGDQFDEDNIDERRKFFSIFYMSINAGSVLSTIITPILRGDVQCFGGDCYALAFGVPAALMVIALVVFISGSGLYKKSPPEGNVLVRVCKCIGFAISNRWTNSKKSPKRSHWLDWAEEKYSKRLIQEIKMVCRVLVLYIPLPMFWALFDQQGSRWTLQATRMNMDFGGGFIIKPDQMQMLNALLILVFIPIFDMGIYPLVGLCRIKLTPLKKMATGMILAALAFCAATAVEVYVIKTVVEPPPAKESLVQVYNLMDSDVTVQFPAHNVFSEPLKPYEEPSGYSSLPLTGESQLQNVVVSHNGMNYQCRLTFTERMAYSLLLHPTAQHNGSVCNLVKDHITKSETGAAYIRFINTHTENINVTVGTEEVHASANYGISRNISVPRGEYNKAVCVTDTKEYEINLGLLDFGAFYTVILSEAGNNLAVKKMEDIQANNIHIGWQIPQYVFLTAGEVMFSITGLEFSYSQAPASMKSVLQAGWLMTVAFGNVIVLIVAEGAGMEQWVEFLLFAALLVAVSIIFSIMAYFYTYVDPDQLDKLFKEDGDGGKVESSKKDELSLGDMPKQTKM.

The Cytoplasmic portion of the chain corresponds to 1 to 43; the sequence is MGKMKDKDVDAEKYEKAQRSPKLCGTNYPVSIAFIVVNEFCER. The helical transmembrane segment at 44–61 threads the bilayer; the sequence is FSYYGMKAVLTLYFMNYL. Over 62 to 69 the chain is Extracellular; it reads HWDKNLST. Asparagine 66 carries an N-linked (GlcNAc...) asparagine glycan. A helical membrane pass occupies residues 70-90; sequence AIYHAFSGLCYFTPLLGALIA. The Cytoplasmic portion of the chain corresponds to 91–99; that stretch reads DSWLGKFKT. Residues 100–120 form a helical membrane-spanning segment; sequence IIYLSIVYVIGHVVKSVGAIP. Over 121–125 the chain is Extracellular; the sequence is DVGDS. Residues 126 to 146 form a helical membrane-spanning segment; sequence TVHIALSMVGLGLIALGTGGI. The Cytoplasmic segment spans residues 147–169; the sequence is KPCVAAFGGDQFDEDNIDERRKF. A helical transmembrane segment spans residues 170-190; the sequence is FSIFYMSINAGSVLSTIITPI. The Extracellular portion of the chain corresponds to 191–201; that stretch reads LRGDVQCFGGD. Residues 202–222 form a helical membrane-spanning segment; sequence CYALAFGVPAALMVIALVVFI. Over 223-280 the chain is Cytoplasmic; the sequence is SGSGLYKKSPPEGNVLVRVCKCIGFAISNRWTNSKKSPKRSHWLDWAEEKYSKRLIQE. The helical transmembrane segment at 281 to 301 threads the bilayer; that stretch reads IKMVCRVLVLYIPLPMFWALF. The Extracellular portion of the chain corresponds to 302–334; that stretch reads DQQGSRWTLQATRMNMDFGGGFIIKPDQMQMLN. The chain crosses the membrane as a helical span at residues 335 to 355; that stretch reads ALLILVFIPIFDMGIYPLVGL. Topologically, residues 356 to 367 are cytoplasmic; it reads CRIKLTPLKKMA. Residues 368–388 form a helical membrane-spanning segment; the sequence is TGMILAALAFCAATAVEVYVI. The Extracellular segment spans residues 389–594; it reads KTVVEPPPAK…QANNIHIGWQ (206 aa). Positions 389 to 594 are extracellular domain (ECD); the sequence is KTVVEPPPAK…QANNIHIGWQ (206 aa). 3 N-linked (GlcNAc...) asparagine glycosylation sites follow: asparagine 481, asparagine 513, and asparagine 532. Residues 595-615 traverse the membrane as a helical segment; that stretch reads IPQYVFLTAGEVMFSITGLEF. The Cytoplasmic portion of the chain corresponds to 616–626; sequence SYSQAPASMKS. A helical membrane pass occupies residues 627–647; the sequence is VLQAGWLMTVAFGNVIVLIVA. The Extracellular segment spans residues 648–657; it reads EGAGMEQWVE. Residues 658 to 678 form a helical membrane-spanning segment; the sequence is FLLFAALLVAVSIIFSIMAYF. The Cytoplasmic portion of the chain corresponds to 679-719; that stretch reads YTYVDPDQLDKLFKEDGDGGKVESSKKDELSLGDMPKQTKM. Residues 695 to 708 show a composition bias toward basic and acidic residues; it reads GDGGKVESSKKDEL. The disordered stretch occupies residues 695-719; the sequence is GDGGKVESSKKDELSLGDMPKQTKM.

The protein belongs to the major facilitator superfamily. Proton-dependent oligopeptide transporter (POT/PTR) (TC 2.A.17) family. As to expression, expressed in kidney, brain and gut. Also expressed weakly in eye, gill and skeletal muscle.

It localises to the apical cell membrane. Its subcellular location is the cytoplasmic vesicle. The protein localises to the phagosome membrane. The protein resides in the cell membrane. It catalyses the reaction a dipeptide(out) + 2 H(+)(out) = a dipeptide(in) + 2 H(+)(in). The catalysed reaction is N-acetyl-D-muramoyl-L-alanyl-D-isoglutamine(out) + 3 H(+)(out) = N-acetyl-D-muramoyl-L-alanyl-D-isoglutamine(in) + 3 H(+)(in). The enzyme catalyses glycyl-L-leucine(out) + 2 H(+)(out) = glycyl-L-leucine(in) + 2 H(+)(in). It carries out the reaction glycyl-L-lysine(out) + 2 H(+)(out) = glycyl-L-lysine(in) + 2 H(+)(in). It catalyses the reaction glycyl-L-glutamate(out) + 3 H(+)(out) = glycyl-L-glutamate(in) + 3 H(+)(in). The catalysed reaction is L-alanyl-L-alanine(out) + 2 H(+)(out) = L-alanyl-L-alanine(in) + 2 H(+)(in). The enzyme catalyses an L-amino acid tripeptide(out) + 2 H(+)(out) = an L-amino acid tripeptide(in) + 2 H(+)(in). It carries out the reaction carnosine(out) + 2 H(+)(out) = carnosine(in) + 2 H(+)(in). Functionally, proton-coupled amino-acid transporter that transports oligopeptides of 2 to 4 amino acids with a preference for dipeptides. Transports neutral and anionic dipeptides with a proton to peptide stoichiometry of 2:1 or 3:1. The sequence is that of Solute carrier family 15 member 2 from Danio rerio (Zebrafish).